The chain runs to 187 residues: MNLLNHFLIAMPSLSDPLFQRSVVYVCEHNENGAMGLVINKPIEDISIESVLEQLEIFSADRDSAISLQKPVMSGGPVAEEHGFILHTPVSGFSSSIKISDSTMITTSKDVLETLGTARQPEKTLVSLGYSSWEKGQLEREILENSWLTVEATPQIIFDTPIAERWHKAAELIGIDIHTISPTAGHA.

This sequence belongs to the UPF0301 (AlgH) family.

In Proteus mirabilis (strain HI4320), this protein is UPF0301 protein PMI0339.